We begin with the raw amino-acid sequence, 281 residues long: Complement C1q tumor necrosis factor-related protein 1 (281 aa).

An N-terminal signal peptide occupies residues 1-25; sequence MGSCAQGFMLGCCLLLAITWGPILS. Residues 35-68 form a disordered region; the sequence is QEWEETEELPSPLDPVTRPEETREKYSPRQGEDL. A compositionally biased stretch (basic and acidic residues) spans 51–66; sequence TRPEETREKYSPRQGE. N-linked (GlcNAc...) asparagine glycosylation is present at Asn-93. One can recognise a Collagen-like domain in the interval 99-140; it reads GEKGDRGDRGLQGKYGKIGSTGPRGHVGPKGQKGSIGAPGNH. Residues 107 to 136 are disordered; it reads RGLQGKYGKIGSTGPRGHVGPKGQKGSIGA. The 141-residue stretch at 141–281 folds into the C1q domain; that stretch reads CKSQYAAFSV…GYLVKPASEP (141 aa).

The protein localises to the secreted. The protein is Complement C1q tumor necrosis factor-related protein 1 (C1qtnf1) of Mus musculus (Mouse).